A 423-amino-acid polypeptide reads, in one-letter code: Diaminobutyrate--2-oxoglutarate transaminase (423 aa).

K267 bears the N6-(pyridoxal phosphate)lysine mark.

The protein belongs to the class-III pyridoxal-phosphate-dependent aminotransferase family. In terms of assembly, homohexamer. Pyridoxal 5'-phosphate serves as cofactor.

The catalysed reaction is L-2,4-diaminobutanoate + 2-oxoglutarate = L-aspartate 4-semialdehyde + L-glutamate. The protein operates within amine and polyamine biosynthesis; ectoine biosynthesis; L-ectoine from L-aspartate 4-semialdehyde: step 1/3. In terms of biological role, catalyzes reversively the conversion of L-aspartate beta-semialdehyde (ASA) to L-2,4-diaminobutyrate (DABA) by transamination with L-glutamate. The polypeptide is Diaminobutyrate--2-oxoglutarate transaminase (ectB) (Chromohalobacter salexigens (strain ATCC BAA-138 / DSM 3043 / CIP 106854 / NCIMB 13768 / 1H11)).